The chain runs to 283 residues: Phospholipid phosphatase 1 (283 aa).

Residues 1–6 (MFDKTR) are Cytoplasmic-facing. The PDZ-binding; involved in localization to the apical cell membrane signature appears at 5–7 (TRL). A helical membrane pass occupies residues 7–27 (LPYVALDVICVLLAGLPFAIL). Residues 28–53 (TSRHTPFQRGIFCNDDSIKYPYKEDT) are Extracellular-facing. Residues 54 to 74 (IPYALLGGIVIPFCIIVMSIG) traverse the membrane as a helical segment. The Cytoplasmic segment spans residues 75–88 (ESLSVYFNVLHSNS). The chain crosses the membrane as a helical span at residues 89-109 (FVGNPYIATIYKAVGAFLFGV). At 110-164 (SASQSLTDIAKYTIGSLRPHFLAICNPDWSKINCSDGYIEDYICQGNEEKVKEGR) the chain is on the extracellular side. The interval 120–128 (KYTIGSLRP) is phosphatase sequence motif I. The N-linked (GlcNAc...) asparagine glycan is linked to Asn142. A helical membrane pass occupies residues 165–185 (LSFYSGHSSFSMYCMLFVALY). The segment at 168–171 (YSGH) is phosphatase sequence motif II. His171 (proton donors) is an active-site residue. The Cytoplasmic segment spans residues 186 to 199 (LQARMKGDWARLLR). A helical transmembrane segment spans residues 200 to 220 (PMLQFGLIAFSIYVGLSRVSD). The tract at residues 216–227 (SRVSDYKHHWSD) is phosphatase sequence motif III. Residues 221–229 (YKHHWSDVT) lie on the Extracellular side of the membrane. His223 serves as the catalytic Nucleophile. Residues 230–250 (VGLIQGAAMAILVALYVSDFF) form a helical membrane-spanning segment. At 251–283 (KDTHSYKERKEEDPHTTLHETASSRNYSTNHEP) the chain is on the cytoplasmic side. Residues 260-283 (KEEDPHTTLHETASSRNYSTNHEP) form a disordered region. The span at 269–283 (HETASSRNYSTNHEP) shows a compositional bias: polar residues.

This sequence belongs to the PA-phosphatase related phosphoesterase family. Forms functional homodimers and homooligomers that are not required for substrate recognition and catalytic activity. Can also form heterooligomers with PLPP2 and PLPP3. Post-translationally, N-glycosylated. N-linked sugars are of the complex type. N-glycosylation is not required for the phosphatase activity. In terms of tissue distribution, widely expressed. Highly expressed in kidney and lung. Almost undetectable in brain, heart, bone, muscle or spleen.

It localises to the cell membrane. The protein resides in the apical cell membrane. The protein localises to the membrane raft. Its subcellular location is the membrane. It is found in the caveola. It catalyses the reaction a 1,2-diacyl-sn-glycero-3-phosphate + H2O = a 1,2-diacyl-sn-glycerol + phosphate. It carries out the reaction 1,2-dihexadecanoyl-sn-glycero-3-phosphate + H2O = 1,2-dihexadecanoyl-sn-glycerol + phosphate. The enzyme catalyses 1,2-di-(9Z-octadecenoyl)-sn-glycero-3-phosphate + H2O = 1,2-di-(9Z-octadecenoyl)-sn-glycerol + phosphate. The catalysed reaction is a monoacyl-sn-glycero-3-phosphate + H2O = a monoacylglycerol + phosphate. It catalyses the reaction (9Z)-octadecenoyl-sn-glycero-3-phosphate + H2O = (9Z-octadecenoyl)-glycerol + phosphate. It carries out the reaction a 1-acyl-sn-glycero-3-phosphate + H2O = a 1-acyl-sn-glycerol + phosphate. The enzyme catalyses 1-(9Z-octadecenoyl)-sn-glycero-3-phosphate + H2O = 1-(9Z-octadecenoyl)-sn-glycerol + phosphate. The catalysed reaction is a 1,2-diacyl-sn-glycerol 3-diphosphate + H2O = a 1,2-diacyl-sn-glycero-3-phosphate + phosphate + H(+). It catalyses the reaction sphing-4-enine 1-phosphate + H2O = sphing-4-enine + phosphate. It carries out the reaction an N-acylsphing-4-enine 1-phosphate + H2O = an N-acylsphing-4-enine + phosphate. The enzyme catalyses N-(octanoyl)-sphing-4-enine-1-phosphate + H2O = N-octanoylsphing-4-enine + phosphate. The catalysed reaction is N-(9Z-octadecenoyl)-ethanolamine phosphate + H2O = N-(9Z-octadecenoyl) ethanolamine + phosphate. It catalyses the reaction 1-hexadecanoyl-2-(9Z-octadecenoyl)-sn-glycero-3-phosphate + H2O = 1-hexadecanoyl-2-(9Z-octadecenoyl)-sn-glycerol + phosphate. Its pathway is lipid metabolism; phospholipid metabolism. Magnesium-independent phospholipid phosphatase. Insensitive to N-ethylmaleimide. Functionally, magnesium-independent phospholipid phosphatase of the plasma membrane that catalyzes the dephosphorylation of a variety of glycerolipid and sphingolipid phosphate esters including phosphatidate/PA, lysophosphatidate/LPA, diacylglycerol pyrophosphate/DGPP, sphingosine 1-phosphate/S1P and ceramide 1-phosphate/C1P. Also acts on N-oleoyl ethanolamine phosphate/N-(9Z-octadecenoyl)-ethanolamine phosphate, a potential physiological compound. Through its extracellular phosphatase activity allows both the hydrolysis and the cellular uptake of these bioactive lipid mediators from the milieu, regulating signal transduction in different cellular processes. It is for instance essential for the extracellular hydrolysis of S1P and subsequent conversion into intracellular S1P. Involved in the regulation of inflammation, platelets activation, cell proliferation and migration among other processes. May also have an intracellular activity to regulate phospholipid-mediated signaling pathways. In Mus musculus (Mouse), this protein is Phospholipid phosphatase 1.